The following is a 285-amino-acid chain: Polyamine aminopropyltransferase (285 aa).

The PABS domain maps to 5–241 (DSWFTEHFQA…GWWSVTLSSK (237 aa)). Residue Gln-35 coordinates S-methyl-5'-thioadenosine. His-66 and Asp-90 together coordinate spermidine. S-methyl-5'-thioadenosine contacts are provided by residues Asp-110 and 141–142 (DG). Residue Asp-160 is the Proton acceptor of the active site. Residue 160-163 (DSTD) participates in spermidine binding. Pro-167 contacts S-methyl-5'-thioadenosine.

This sequence belongs to the spermidine/spermine synthase family. As to quaternary structure, homodimer or homotetramer.

It localises to the cytoplasm. The catalysed reaction is S-adenosyl 3-(methylsulfanyl)propylamine + putrescine = S-methyl-5'-thioadenosine + spermidine + H(+). It participates in amine and polyamine biosynthesis; spermidine biosynthesis; spermidine from putrescine: step 1/1. Catalyzes the irreversible transfer of a propylamine group from the amino donor S-adenosylmethioninamine (decarboxy-AdoMet) to putrescine (1,4-diaminobutane) to yield spermidine. This is Polyamine aminopropyltransferase from Xylella fastidiosa (strain 9a5c).